The primary structure comprises 490 residues: Betaine aldehyde dehydrogenase (490 aa).

Aspartate 93 lines the K(+) pocket. 150-152 (GAW) is a binding site for NAD(+). Lysine 162 acts as the Charge relay system in catalysis. 176 to 179 (KPSE) lines the NAD(+) pocket. Residue valine 180 participates in K(+) binding. 230-233 (GIAS) contributes to the NAD(+) binding site. Leucine 246 serves as a coordination point for K(+). Glutamate 252 serves as the catalytic Proton acceptor. NAD(+) is bound by residues glycine 254, cysteine 286, and glutamate 387. Cysteine 286 functions as the Nucleophile in the catalytic mechanism. Residue cysteine 286 is modified to Cysteine sulfenic acid (-SOH). 2 residues coordinate K(+): lysine 457 and glycine 460. Catalysis depends on glutamate 464, which acts as the Charge relay system.

This sequence belongs to the aldehyde dehydrogenase family. Dimer of dimers. Requires K(+) as cofactor.

It catalyses the reaction betaine aldehyde + NAD(+) + H2O = glycine betaine + NADH + 2 H(+). The protein operates within amine and polyamine biosynthesis; betaine biosynthesis via choline pathway; betaine from betaine aldehyde: step 1/1. Functionally, involved in the biosynthesis of the osmoprotectant glycine betaine. Catalyzes the irreversible oxidation of betaine aldehyde to the corresponding acid. The sequence is that of Betaine aldehyde dehydrogenase from Yersinia pseudotuberculosis serotype I (strain IP32953).